A 338-amino-acid chain; its full sequence is tRNA N6-adenosine threonylcarbamoyltransferase (338 aa).

Histidine 111 and histidine 115 together coordinate Fe cation. Residues 134-138 (VVSGG), aspartate 167, glycine 180, aspartate 184, and asparagine 272 each bind substrate. A Fe cation-binding site is contributed by aspartate 300.

It belongs to the KAE1 / TsaD family. It depends on Fe(2+) as a cofactor.

The protein resides in the cytoplasm. The catalysed reaction is L-threonylcarbamoyladenylate + adenosine(37) in tRNA = N(6)-L-threonylcarbamoyladenosine(37) in tRNA + AMP + H(+). Required for the formation of a threonylcarbamoyl group on adenosine at position 37 (t(6)A37) in tRNAs that read codons beginning with adenine. Is involved in the transfer of the threonylcarbamoyl moiety of threonylcarbamoyl-AMP (TC-AMP) to the N6 group of A37, together with TsaE and TsaB. TsaD likely plays a direct catalytic role in this reaction. In Syntrophus aciditrophicus (strain SB), this protein is tRNA N6-adenosine threonylcarbamoyltransferase.